The chain runs to 233 residues: Large ribosomal subunit protein uL1 (233 aa).

This sequence belongs to the universal ribosomal protein uL1 family. As to quaternary structure, part of the 50S ribosomal subunit.

Functionally, binds directly to 23S rRNA. The L1 stalk is quite mobile in the ribosome, and is involved in E site tRNA release. Its function is as follows. Protein L1 is also a translational repressor protein, it controls the translation of the L11 operon by binding to its mRNA. This is Large ribosomal subunit protein uL1 from Parvibaculum lavamentivorans (strain DS-1 / DSM 13023 / NCIMB 13966).